The chain runs to 59 residues: Large ribosomal subunit protein uL30 (59 aa).

The protein belongs to the universal ribosomal protein uL30 family. In terms of assembly, part of the 50S ribosomal subunit.

This is Large ribosomal subunit protein uL30 from Solidesulfovibrio magneticus (strain ATCC 700980 / DSM 13731 / RS-1) (Desulfovibrio magneticus).